A 264-amino-acid polypeptide reads, in one-letter code: Cytosolic Fe-S cluster assembly factor Nubp2 homolog (264 aa).

14–21 (GKGGVGKS) lines the ATP pocket. [4Fe-4S] cluster-binding residues include C188 and C191.

This sequence belongs to the Mrp/NBP35 ATP-binding proteins family. NUBP2/CFD1 subfamily. In terms of assembly, heterotetramer of 2 Nubp1 and 2 Nubp2 chains. Requires [4Fe-4S] cluster as cofactor.

The protein resides in the cytoplasm. Its function is as follows. Component of the cytosolic iron-sulfur (Fe/S) protein assembly (CIA) machinery. Required for maturation of extramitochondrial Fe-S proteins. The Nubp1-Nubp2 heterotetramer forms a Fe-S scaffold complex, mediating the de novo assembly of an Fe-S cluster and its transfer to target apoproteins. This chain is Cytosolic Fe-S cluster assembly factor Nubp2 homolog, found in Drosophila grimshawi (Hawaiian fruit fly).